Reading from the N-terminus, the 590-residue chain is Arginine--tRNA ligase (590 aa).

The 'HIGH' region signature appears at Ala-130 to His-140.

The protein belongs to the class-I aminoacyl-tRNA synthetase family. As to quaternary structure, monomer.

The protein localises to the cytoplasm. The enzyme catalyses tRNA(Arg) + L-arginine + ATP = L-arginyl-tRNA(Arg) + AMP + diphosphate. This is Arginine--tRNA ligase from Methylobacterium nodulans (strain LMG 21967 / CNCM I-2342 / ORS 2060).